The chain runs to 238 residues: uncharacterized protein (238 aa).

The disordered stretch occupies residues 1 to 20 (MPNLHSLPLGTRPENAIRNN).

This sequence belongs to the PEP2 family.

This is an uncharacterized protein from Emericella nidulans (strain FGSC A4 / ATCC 38163 / CBS 112.46 / NRRL 194 / M139) (Aspergillus nidulans).